The sequence spans 90 residues: PIK3R3 upstream open reading frame protein (90 aa).

A disordered region spans residues 1–63 (MGPSQLVRAP…PASEATNISD (63 aa)). Positions 27-46 (PRRRCPSMFKCSRRTYRQKP) are enriched in basic residues. Over residues 50-63 (TATNPASEATNISD) the composition is skewed to polar residues.

The chain is PIK3R3 upstream open reading frame protein from Mus musculus (Mouse).